We begin with the raw amino-acid sequence, 277 residues long: Large ribosomal subunit protein uL2 (277 aa).

Residues 226–277 form a disordered region; it reads NPIDHPHGGGEGRTSGGRHPVTPWGKPTKGKKTRSNKSTNKFILISRHKRKK.

It belongs to the universal ribosomal protein uL2 family. As to quaternary structure, part of the 50S ribosomal subunit. Forms a bridge to the 30S subunit in the 70S ribosome.

In terms of biological role, one of the primary rRNA binding proteins. Required for association of the 30S and 50S subunits to form the 70S ribosome, for tRNA binding and peptide bond formation. It has been suggested to have peptidyltransferase activity; this is somewhat controversial. Makes several contacts with the 16S rRNA in the 70S ribosome. This is Large ribosomal subunit protein uL2 from Rhodopseudomonas palustris (strain BisA53).